The chain runs to 532 residues: Purple acid phosphatase 15 (532 aa).

A signal peptide spans 1 to 19 (MTFLLLLLFCFLSPAISSA). An N-linked (GlcNAc...) asparagine glycan is attached at Asn-136. Asp-194 contributes to the Fe cation binding site. Residue Asn-200 is glycosylated (N-linked (GlcNAc...) asparagine). Positions 221 and 224 each coordinate Fe cation. Position 221 (Asp-221) interacts with Zn(2+). 2 N-linked (GlcNAc...) asparagine glycosylation sites follow: Asn-231 and Asn-264. Residue Asn-277 coordinates Zn(2+). Residue Asn-277 coordinates substrate. Asn-286 and Asn-301 each carry an N-linked (GlcNAc...) asparagine glycan. Zn(2+) is bound at residue His-359. Catalysis depends on His-369, which acts as the Proton donor. His-396 contacts Zn(2+). 396 to 398 (HVH) serves as a coordination point for substrate. His-398 is a Fe cation binding site. Asn-491 is a glycosylation site (N-linked (GlcNAc...) asparagine).

It belongs to the metallophosphoesterase superfamily. Purple acid phosphatase family. In terms of assembly, homodimer. Fe cation is required as a cofactor. Zn(2+) serves as cofactor. As to expression, expressed in roots, stems, cotyledons, leaves, flowers and siliques.

The protein resides in the secreted. It catalyses the reaction 1D-myo-inositol hexakisphosphate + H2O = 1D-myo-inositol 1,2,3,5,6-pentakisphosphate + phosphate. The enzyme catalyses a phosphate monoester + H2O = an alcohol + phosphate. Functionally, acid phosphatase activity with p-nitrophenyl phosphate (pNPP), D-myoinositol 1-phosphate (Ins(1)P1), phytic acid and Myo-inositol hexakisphosphate. Low or no activity with Glc-6-P and ATP. Confers shoot growth stimulation, enhanced salt and osmotic stress tolerance, and ABA insensitivity. May modulate ascorbic acid (AsA) levels by controlling the input of myoinositol into this branch of AsA biosynthesis. This is Purple acid phosphatase 15 (PAP15) from Arabidopsis thaliana (Mouse-ear cress).